We begin with the raw amino-acid sequence, 97 residues long: Type 1 phosphatases regulator YPI2 (97 aa).

The segment at 1-97 (MNKKKTKICC…KMMEKKSNNT (97 aa)) is disordered. Over residues 43-53 (ENDKDLGFDER) the composition is skewed to basic and acidic residues. Basic residues predominate over residues 54-65 (RKRRVERRRRKL).

Belongs to the YPI1 family.

Its subcellular location is the nucleus. Its function is as follows. Regulator of type 1 phosphatases which maintains protein phosphatase activity under strict control. The protein is Type 1 phosphatases regulator YPI2 (YPI2) of Vanderwaltozyma polyspora (strain ATCC 22028 / DSM 70294 / BCRC 21397 / CBS 2163 / NBRC 10782 / NRRL Y-8283 / UCD 57-17) (Kluyveromyces polysporus).